A 247-amino-acid chain; its full sequence is tRNA (guanine-N(1)-)-methyltransferase (247 aa).

S-adenosyl-L-methionine contacts are provided by residues Gly113 and 133 to 138; that span reads IGDFVM.

Belongs to the RNA methyltransferase TrmD family. As to quaternary structure, homodimer.

Its subcellular location is the cytoplasm. It carries out the reaction guanosine(37) in tRNA + S-adenosyl-L-methionine = N(1)-methylguanosine(37) in tRNA + S-adenosyl-L-homocysteine + H(+). Its function is as follows. Specifically methylates guanosine-37 in various tRNAs. This Vibrio campbellii (strain ATCC BAA-1116) protein is tRNA (guanine-N(1)-)-methyltransferase.